The primary structure comprises 261 residues: Triosephosphate isomerase (261 aa).

10–12 serves as a coordination point for substrate; sequence NWK. Catalysis depends on His100, which acts as the Electrophile. The Proton acceptor role is filled by Glu172. Substrate contacts are provided by residues Gly178, Ser218, and 239–240; that span reads GG.

This sequence belongs to the triosephosphate isomerase family. Homodimer.

The protein resides in the cytoplasm. It catalyses the reaction D-glyceraldehyde 3-phosphate = dihydroxyacetone phosphate. It functions in the pathway carbohydrate biosynthesis; gluconeogenesis. Its pathway is carbohydrate degradation; glycolysis; D-glyceraldehyde 3-phosphate from glycerone phosphate: step 1/1. In terms of biological role, involved in the gluconeogenesis. Catalyzes stereospecifically the conversion of dihydroxyacetone phosphate (DHAP) to D-glyceraldehyde-3-phosphate (G3P). This Mycobacterium leprae (strain TN) protein is Triosephosphate isomerase.